A 280-amino-acid chain; its full sequence is Ribosomal RNA small subunit methyltransferase A (280 aa).

5 residues coordinate S-adenosyl-L-methionine: leucine 24, glycine 49, glutamate 70, aspartate 95, and asparagine 118.

It belongs to the class I-like SAM-binding methyltransferase superfamily. rRNA adenine N(6)-methyltransferase family. RsmA subfamily.

Its subcellular location is the cytoplasm. The enzyme catalyses adenosine(1518)/adenosine(1519) in 16S rRNA + 4 S-adenosyl-L-methionine = N(6)-dimethyladenosine(1518)/N(6)-dimethyladenosine(1519) in 16S rRNA + 4 S-adenosyl-L-homocysteine + 4 H(+). Functionally, specifically dimethylates two adjacent adenosines (A1518 and A1519) in the loop of a conserved hairpin near the 3'-end of 16S rRNA in the 30S particle. May play a critical role in biogenesis of 30S subunits. The sequence is that of Ribosomal RNA small subunit methyltransferase A from Syntrophus aciditrophicus (strain SB).